Reading from the N-terminus, the 326-residue chain is Neuferricin homolog (326 aa).

A signal peptide spans 1–34 (MDKNRRRTDDAGLMTKTLAGIAALVFFLSFICSS). One can recognise a Cytochrome b5 heme-binding domain in the interval 98–197 (KHVFTPEQLH…KEYPLVGVVA (100 aa)).

This sequence belongs to the cytochrome b5 family. MAPR subfamily.

The protein localises to the secreted. Functionally, heme-binding protein. The sequence is that of Neuferricin homolog (tag-131) from Caenorhabditis elegans.